We begin with the raw amino-acid sequence, 129 residues long: Chorion class A protein L11 (129 aa).

Positions 1–21 are cleaved as a signal peptide; sequence MSTFAFLLLCVQACLIQNVYG. Positions 22–64 are left arm; that stretch reads QCLGRGLGGCGCGGGLGGYGLGYGLGGYGGGYGYGGYGGGYYG. A central domain region spans residues 65-112; sequence GYGGEGVGNVGVAGVLPVGGVTAVGGRVPIIGGVEFGGPACAGGCVSI. Residues 113–129 are right arm; sequence CGHCAPTCGCGYGGLYY.

Belongs to the chorion protein family.

This protein is one of many from the eggshell of the silk moth. The chain is Chorion class A protein L11 from Bombyx mori (Silk moth).